Consider the following 463-residue polypeptide: L-seryl-tRNA(Sec) selenium transferase (463 aa).

At Lys-295 the chain carries N6-(pyridoxal phosphate)lysine.

The protein belongs to the SelA family. As to quaternary structure, homodecamer; pentamer of dimers. Binds only one seryl-tRNA(Sec) per dimer. Pyridoxal 5'-phosphate is required as a cofactor.

The protein localises to the cytoplasm. The enzyme catalyses L-seryl-tRNA(Sec) + selenophosphate + H(+) = L-selenocysteinyl-tRNA(Sec) + phosphate. The protein operates within aminoacyl-tRNA biosynthesis; selenocysteinyl-tRNA(Sec) biosynthesis; selenocysteinyl-tRNA(Sec) from L-seryl-tRNA(Sec) (bacterial route): step 1/1. In terms of biological role, converts seryl-tRNA(Sec) to selenocysteinyl-tRNA(Sec) required for selenoprotein biosynthesis. This chain is L-seryl-tRNA(Sec) selenium transferase, found in Escherichia coli (strain SMS-3-5 / SECEC).